A 250-amino-acid polypeptide reads, in one-letter code: Probable transcriptional regulatory protein RHA1_ro06891 (250 aa).

This sequence belongs to the TACO1 family.

Its subcellular location is the cytoplasm. The chain is Probable transcriptional regulatory protein RHA1_ro06891 from Rhodococcus jostii (strain RHA1).